The primary structure comprises 218 residues: Hypoxanthine-guanine phosphoribosyltransferase (218 aa).

The residue at position 2 (A2) is an N-acetylalanine. K69 lines the GMP pocket. Residue K103 is modified to N6-acetyllysine. K115 is covalently cross-linked (Glycyl lysine isopeptide (Lys-Gly) (interchain with G-Cter in SUMO1); alternate). A Glycyl lysine isopeptide (Lys-Gly) (interchain with G-Cter in SUMO2); alternate cross-link involves residue K115. GMP-binding positions include 134–142 (EDIIDTGKT), K166, 186–188 (KFV), and D194. D138 acts as the Proton acceptor in catalysis. T142 is modified (phosphothreonine). D194 is a binding site for Mg(2+).

It belongs to the purine/pyrimidine phosphoribosyltransferase family. In terms of assembly, homotetramer. It depends on Mg(2+) as a cofactor.

The protein localises to the cytoplasm. It carries out the reaction IMP + diphosphate = hypoxanthine + 5-phospho-alpha-D-ribose 1-diphosphate. The enzyme catalyses GMP + diphosphate = guanine + 5-phospho-alpha-D-ribose 1-diphosphate. It functions in the pathway purine metabolism; IMP biosynthesis via salvage pathway; IMP from hypoxanthine: step 1/1. Functionally, converts guanine to guanosine monophosphate, and hypoxanthine to inosine monophosphate. Transfers the 5-phosphoribosyl group from 5-phosphoribosylpyrophosphate onto the purine. Plays a central role in the generation of purine nucleotides through the purine salvage pathway. This chain is Hypoxanthine-guanine phosphoribosyltransferase (HPRT1), found in Canis lupus familiaris (Dog).